Here is a 502-residue protein sequence, read N- to C-terminus: Myocilin (502 aa).

The N-terminal stretch at 1-31 is a signal peptide; that stretch reads MPSCAYCCSCGPKMPALQLLFLACLVWGMGA. The stretch at 82-183 forms a coiled coil; that stretch reads ADLESTKARV…QEVARLRRGQ (102 aa). The disordered stretch occupies residues 166–198; sequence ARRLEGSSQEVARLRRGQCPSTHHPSQDMLPGS. N-linked (GlcNAc...) asparagine glycosylation occurs at asparagine 229. Positions 242 to 501 constitute an Olfactomedin-like domain; the sequence is GCGVLMWVGE…MVTYDIKLSE (260 aa). A disulfide bridge connects residues cysteine 243 and cysteine 431. Positions 378, 426, 427, 475, and 476 each coordinate Ca(2+).

As to quaternary structure, homodimer (via N-terminus). Can also form higher oligomers. Interacts with OLFM3, FN1, NRCAM, GLDN and NFASC. Interacts (via N-terminus) with MYL2. Interacts with SFRP1, FRZB, FZD7, FZD10, FZD1 and WIF1; regulates Wnt signaling. Interacts with SNTA1; regulates muscle hypertrophy. Interacts with ERBB2 and ERBB3; activates ERBB2-ERBB3 signaling pathway. Interacts with SNCG; affects its secretion and its aggregation. Post-translationally, palmitoylated. Undergoes a calcium-dependent proteolytic cleavage at Gln-225 by CAPN2 in the endoplasmic reticulum. The result is the production of two fragments, one of 35 kDa containing the C-terminal olfactomedin-like domain, and another of 20 kDa containing the N-terminal leucine zipper-like domain. In terms of processing, glycosylated. Highly expressed in skeletal muscle and retina. Also detected at lower levels in thyroid gland but not in other endocrine glands such as the adrenal or pituitary glands.

The protein resides in the secreted. It localises to the golgi apparatus. It is found in the cytoplasmic vesicle. Its subcellular location is the extracellular space. The protein localises to the extracellular matrix. The protein resides in the extracellular exosome. It localises to the mitochondrion. It is found in the mitochondrion intermembrane space. Its subcellular location is the mitochondrion inner membrane. The protein localises to the mitochondrion outer membrane. The protein resides in the rough endoplasmic reticulum. It localises to the cell projection. It is found in the cilium. Its subcellular location is the endoplasmic reticulum. In terms of biological role, secreted glycoprotein regulating the activation of different signaling pathways in adjacent cells to control different processes including cell adhesion, cell-matrix adhesion, cytoskeleton organization and cell migration. Promotes substrate adhesion, spreading and formation of focal contacts. Negatively regulates cell-matrix adhesion and stress fiber assembly through Rho protein signal transduction. Modulates the organization of actin cytoskeleton by stimulating the formation of stress fibers through interactions with components of Wnt signaling pathways. Promotes cell migration through activation of PTK2 and the downstream phosphatidylinositol 3-kinase signaling. Plays a role in bone formation and promotes osteoblast differentiation in a dose-dependent manner through mitogen-activated protein kinase signaling. Mediates myelination in the peripheral nervous system through ERBB2/ERBB3 signaling. Plays a role as a regulator of muscle hypertrophy through the components of dystrophin-associated protein complex. Involved in positive regulation of mitochondrial depolarization. Plays a role in neurite outgrowth. May participate in the obstruction of fluid outflow in the trabecular meshwork. The polypeptide is Myocilin (Myoc) (Rattus norvegicus (Rat)).